Reading from the N-terminus, the 186-residue chain is Ribosome-recycling factor (186 aa).

Belongs to the RRF family.

The protein localises to the cytoplasm. In terms of biological role, responsible for the release of ribosomes from messenger RNA at the termination of protein biosynthesis. May increase the efficiency of translation by recycling ribosomes from one round of translation to another. The chain is Ribosome-recycling factor from Bartonella quintana (strain Toulouse) (Rochalimaea quintana).